We begin with the raw amino-acid sequence, 310 residues long: Protein BIG GRAIN 1 (310 aa).

The segment at 81–141 is disordered; sequence RAPGPHATTS…KKAKKPGASI (61 aa). Positions 90 to 106 are enriched in low complexity; it reads SSSSECSSYGGFSSSEA.

This sequence belongs to the BIG GRAIN 1 (BG1) plant protein family.

The protein resides in the cell membrane. Its function is as follows. Involved in auxin transport. Positive regulator of the auxin signaling pathway involved in gravitropism, plant growth and grain development. This is Protein BIG GRAIN 1 from Oryza sativa subsp. indica (Rice).